Reading from the N-terminus, the 180-residue chain is Ribosome maturation factor RimM (180 aa).

One can recognise a PRC barrel domain in the interval 99-172; it reads EDEFYQVDLI…FLVVDPVAAG (74 aa).

Belongs to the RimM family. In terms of assembly, binds ribosomal protein uS19.

It localises to the cytoplasm. In terms of biological role, an accessory protein needed during the final step in the assembly of 30S ribosomal subunit, possibly for assembly of the head region. Essential for efficient processing of 16S rRNA. May be needed both before and after RbfA during the maturation of 16S rRNA. It has affinity for free ribosomal 30S subunits but not for 70S ribosomes. In Bartonella henselae (strain ATCC 49882 / DSM 28221 / CCUG 30454 / Houston 1) (Rochalimaea henselae), this protein is Ribosome maturation factor RimM.